The primary structure comprises 125 residues: UPF0251 protein DSY3441 (125 aa).

The protein belongs to the UPF0251 family.

This Desulfitobacterium hafniense (strain Y51) protein is UPF0251 protein DSY3441.